We begin with the raw amino-acid sequence, 397 residues long: Acetyl-CoA acetyltransferase, cytosolic (397 aa).

Methionine 1 carries the N-acetylmethionine modification. Residue cysteine 92 is the Acyl-thioester intermediate of the active site. Lysine 200 carries the post-translational modification N6-acetyllysine. Residues arginine 223 and serine 226 each coordinate CoA. An N6-acetyllysine mark is found at lysine 233 and lysine 235. CoA is bound at residue serine 252. Residue cysteine 383 is the Proton donor/acceptor of the active site.

Belongs to the thiolase-like superfamily. Thiolase family. As to quaternary structure, homotetramer.

The protein resides in the cytoplasm. The protein localises to the cytosol. It carries out the reaction 2 acetyl-CoA = acetoacetyl-CoA + CoA. It functions in the pathway lipid metabolism; fatty acid metabolism. Its function is as follows. Involved in the biosynthetic pathway of cholesterol. In Homo sapiens (Human), this protein is Acetyl-CoA acetyltransferase, cytosolic (ACAT2).